The following is an 82-amino-acid chain: Small ribosomal subunit protein eS27A (82 aa).

A C4-type zinc finger spans residues 37–59 (CPGCLNITTVFSHAQTAVTCESC). The residue at position 40 (Cys-40) is an S-methylcysteine.

This sequence belongs to the eukaryotic ribosomal protein eS27 family. As to quaternary structure, component of the small ribosomal subunit (SSU). Mature yeast ribosomes consist of a small (40S) and a large (60S) subunit. The 40S small subunit contains 1 molecule of ribosomal RNA (18S rRNA) and 33 different proteins (encoded by 57 genes). The large 60S subunit contains 3 rRNA molecules (25S, 5.8S and 5S rRNA) and 46 different proteins (encoded by 81 genes). The cofactor is Zn(2+). Post-translationally, the N-terminus is not modified.

It is found in the cytoplasm. In terms of biological role, component of the ribosome, a large ribonucleoprotein complex responsible for the synthesis of proteins in the cell. The small ribosomal subunit (SSU) binds messenger RNAs (mRNAs) and translates the encoded message by selecting cognate aminoacyl-transfer RNA (tRNA) molecules. The large subunit (LSU) contains the ribosomal catalytic site termed the peptidyl transferase center (PTC), which catalyzes the formation of peptide bonds, thereby polymerizing the amino acids delivered by tRNAs into a polypeptide chain. The nascent polypeptides leave the ribosome through a tunnel in the LSU and interact with protein factors that function in enzymatic processing, targeting, and the membrane insertion of nascent chains at the exit of the ribosomal tunnel. This Saccharomyces cerevisiae (strain ATCC 204508 / S288c) (Baker's yeast) protein is Small ribosomal subunit protein eS27A.